Reading from the N-terminus, the 651-residue chain is MQDILGSVRRSLVFRSSLAGDDGTSGGGLSGFVGKINSSIRSSRIGLFSKPPPGLPAPRKEEAPSIRWRKGELIGCGAFGRVYMGMNLDSGELLAIKQVLIAPSSASKEKTQGHIRELEEEVQLLKNLSHPNIVRYLGTVRESDSLNILMEFVPGGSISSLLEKFGSFPEPVIIMYTKQLLLGLEYLHNNGIMHRDIKGANILVDNKGCIRLADFGASKKVVELATVNGAKSMKGTPYWMAPEVILQTGHSFSADIWSVGCTVIEMATGKPPWSEQYQQFAAVLHIGRTKAHPPIPEDLSPEAKDFLMKCLHKEPSLRLSATELLQHPFVTGKRQEPYPAYRNSLTECGNPITTQGMNVRSSINSLIRRSTCSGLKDVCELGSLRSSIIYPQKSNNSGFGWRDGDSDDLCQTDMDDLCNIESVRNNVLSQSTDLNKSFNPMCDSTDNWSCKFDESPKVMKSKSNLLSYQASQLQTGVPCDEETSLTFAGGSSVAEDDYKGTELKIKSFLDEKAQDLKRLQTPLLEEFHNAMNPGIPQGALGDTNIYNLPNLPSISKTPKRLPSRRLSAISDAMPSPLKSSKRTLNTSRVMQSGTEPTQVNESTKKGVNNSRCFSEIRRKWEEELYEELERHRENLRHAGAGGKTPLSGHKG.

Positions 68–330 (WRKGELIGCG…ATELLQHPFV (263 aa)) constitute a Protein kinase domain. ATP-binding positions include 74 to 82 (IGCGAFGRV) and Lys-97. Residues 105–130 (SASKEKTQGHIRELEEEVQLLKNLSH) adopt a coiled-coil conformation. Glycyl lysine isopeptide (Lys-Gly) (interchain with G-Cter in ubiquitin) cross-links involve residues Lys-108 and Lys-110. The Proton acceptor role is filled by Asp-196. The tract at residues 573 to 608 (MPSPLKSSKRTLNTSRVMQSGTEPTQVNESTKKGVN) is disordered. Over residues 582–608 (RTLNTSRVMQSGTEPTQVNESTKKGVN) the composition is skewed to polar residues. A coiled-coil region spans residues 618-641 (RKWEEELYEELERHRENLRHAGAG).

Belongs to the protein kinase superfamily. STE Ser/Thr protein kinase family. MAP kinase kinase kinase subfamily. Interacts with NACK2 and MKK6. As to expression, expressed in roots and flowers.

Its subcellular location is the cytoplasm. It localises to the cytoskeleton. It catalyses the reaction L-seryl-[protein] + ATP = O-phospho-L-seryl-[protein] + ADP + H(+). The catalysed reaction is L-threonyl-[protein] + ATP = O-phospho-L-threonyl-[protein] + ADP + H(+). Its function is as follows. Involved in cortical microtubules organization and stabilization by regulating the phosphorylation state of microtubule-associated proteins such as MAP65-1. This chain is Mitogen-activated protein kinase kinase kinase 3 (ANP3), found in Arabidopsis thaliana (Mouse-ear cress).